Consider the following 150-residue polypeptide: Ventricular natriuretic peptide (150 aa).

Positions 1-21 (MAKSGIYLGCFILILIQNMVA) are cleaved as a signal peptide. The segment at 52 to 75 (EEPEVYPESEDMKMDAEEEDAGIS) is disordered. A disulfide bridge connects residues Cys-120 and Cys-136.

It belongs to the natriuretic peptide family. In terms of tissue distribution, heart ventricle, and to a lower extent in heart atrium.

It localises to the secreted. Its function is as follows. Exhibits natriuretic and vasodepressor activity. The sequence is that of Ventricular natriuretic peptide (vnp) from Anguilla japonica (Japanese eel).